Consider the following 905-residue polypeptide: DNA gyrase subunit A (905 aa).

A Topo IIA-type catalytic domain is found at 35 to 524; the sequence is IPDVRDGLKP…GEFDQDIEDL (490 aa). Tyr123 functions as the O-(5'-phospho-DNA)-tyrosine intermediate in the catalytic mechanism. Residues 551–557 carry the GyrA-box motif; the sequence is QKRGGKG.

It belongs to the type II topoisomerase GyrA/ParC subunit family. In terms of assembly, heterotetramer, composed of two GyrA and two GyrB chains. In the heterotetramer, GyrA contains the active site tyrosine that forms a transient covalent intermediate with DNA, while GyrB binds cofactors and catalyzes ATP hydrolysis.

It localises to the cytoplasm. It carries out the reaction ATP-dependent breakage, passage and rejoining of double-stranded DNA.. Its function is as follows. A type II topoisomerase that negatively supercoils closed circular double-stranded (ds) DNA in an ATP-dependent manner to modulate DNA topology and maintain chromosomes in an underwound state. Negative supercoiling favors strand separation, and DNA replication, transcription, recombination and repair, all of which involve strand separation. Also able to catalyze the interconversion of other topological isomers of dsDNA rings, including catenanes and knotted rings. Type II topoisomerases break and join 2 DNA strands simultaneously in an ATP-dependent manner. This is DNA gyrase subunit A from Rickettsia prowazekii (strain Madrid E).